Consider the following 353-residue polypeptide: 3-isopropylmalate dehydrogenase (353 aa).

Arg-97, Arg-107, Arg-135, and Asp-219 together coordinate substrate. Mg(2+)-binding residues include Asp-219, Asp-243, and Asp-247.

Belongs to the isocitrate and isopropylmalate dehydrogenases family. LeuB type 1 subfamily. Homodimer. Requires Mg(2+) as cofactor. Mn(2+) serves as cofactor.

It localises to the cytoplasm. It catalyses the reaction (2R,3S)-3-isopropylmalate + NAD(+) = 4-methyl-2-oxopentanoate + CO2 + NADH. It functions in the pathway amino-acid biosynthesis; L-leucine biosynthesis; L-leucine from 3-methyl-2-oxobutanoate: step 3/4. In terms of biological role, catalyzes the oxidation of 3-carboxy-2-hydroxy-4-methylpentanoate (3-isopropylmalate) to 3-carboxy-4-methyl-2-oxopentanoate. The product decarboxylates to 4-methyl-2 oxopentanoate. In Bacteroides fragilis (strain ATCC 25285 / DSM 2151 / CCUG 4856 / JCM 11019 / LMG 10263 / NCTC 9343 / Onslow / VPI 2553 / EN-2), this protein is 3-isopropylmalate dehydrogenase.